Here is a 514-residue protein sequence, read N- to C-terminus: FAD-dependent monooxygenase AacuC (514 aa).

The tract at residues 1-29 (MVSNEYLTHGDKDEFDPAKWSSTPGELPP) is disordered. Residues 8–17 (THGDKDEFDP) are compositionally biased toward basic and acidic residues. 2 residues coordinate FAD: Val-79 and Arg-146. The active site involves Arg-227. FAD-binding residues include Asp-358 and Gly-371.

It belongs to the paxM FAD-dependent monooxygenase family. FAD is required as a cofactor.

It functions in the pathway secondary metabolite biosynthesis. Functionally, FAD-dependent monooxygenase; part of the gene cluster that mediates the biosynthesis of the tetrahydroxanthone dimer secalonic acid D. The pathway begins with the synthesis of atrochrysone thioester by the polyketide synthase AacuL. The atrochrysone carboxyl ACP thioesterase AacuM then breaks the thioester bond and releases the atrochrysone carboxylic acid from AacuL. Atrochrysone carboxylic acid is decarboxylated by the decarboxylase AacuI, and oxidized by the anthrone oxygenase AacuG to yield emodin. Emodin is then reduced to emodin hydroquinone by a yet unidentified oxidoreductase. A-ring reduction by the short chain dehydrogenase AacuN, dehydration by the scytalone dehydratase-like protein AacuK and probable spontaneous re-oxidation, results in overall deoxygenation to chrysophanol. Baeyer-Villiger oxidation by the Baeyer-Villiger monooxygenase (BVMO) AacuH then yields monodictyphenone. Monodictyphenone is transformed into compounds with the tetrahydroxanthone skeleton via methylesterification by the methyltransferase AacuQ, followed by the action of the flavin-dependent monooxygenase AacuC, the isomerase AacuP, and the short chain dehydrogenase/reductase AacuF or AacuD. AacuF and AacuD should accept the same compound as a substrate but perform the ketoreduction with a different stereoselectivity, thus yielding blennolides B and A, respectively. In the final step of the biosynthesis, the cytochrome P450 monooxygenase AacuE accepts blennolide B and/or blennolide A to conduct the dimerization reaction to furnish the tetrahydroxanthone dimers, secalonic acids D, B, and F. The chain is FAD-dependent monooxygenase AacuC from Aspergillus aculeatus (strain ATCC 16872 / CBS 172.66 / WB 5094).